Here is a 401-residue protein sequence, read N- to C-terminus: Probable sodium/metabolite cotransporter BASS1, chloroplastic (401 aa).

The N-terminal 70 residues, 1 to 70 (MASAISLSLL…RRSRFDFVPR (70 aa)), are a transit peptide targeting the chloroplast. 9 helical membrane-spanning segments follow: residues 92–112 (FVGE…CLLG), 122–142 (VTPN…GMTL), 156–176 (ELFA…FFVS), 187–207 (AGLI…VTYI), 212–232 (VALS…MTPL), 247–267 (LGLL…GAFL), 278–298 (VSPV…GYAI), 311–331 (QVVL…YLFS), and 371–391 (VPCA…AGIW).

Belongs to the bile acid:sodium symporter (BASS) (TC 2.A.28) family.

It localises to the membrane. It is found in the plastid. Its subcellular location is the chloroplast envelope. In terms of biological role, may function as sodium-coupled metabolite transporter across the chloroplast envelope. The protein is Probable sodium/metabolite cotransporter BASS1, chloroplastic (BASS1) of Arabidopsis thaliana (Mouse-ear cress).